Consider the following 476-residue polypeptide: Aspartyl/glutamyl-tRNA(Asn/Gln) amidotransferase subunit B (476 aa).

It belongs to the GatB/GatE family. GatB subfamily. Heterotrimer of A, B and C subunits.

It carries out the reaction L-glutamyl-tRNA(Gln) + L-glutamine + ATP + H2O = L-glutaminyl-tRNA(Gln) + L-glutamate + ADP + phosphate + H(+). The enzyme catalyses L-aspartyl-tRNA(Asn) + L-glutamine + ATP + H2O = L-asparaginyl-tRNA(Asn) + L-glutamate + ADP + phosphate + 2 H(+). Functionally, allows the formation of correctly charged Asn-tRNA(Asn) or Gln-tRNA(Gln) through the transamidation of misacylated Asp-tRNA(Asn) or Glu-tRNA(Gln) in organisms which lack either or both of asparaginyl-tRNA or glutaminyl-tRNA synthetases. The reaction takes place in the presence of glutamine and ATP through an activated phospho-Asp-tRNA(Asn) or phospho-Glu-tRNA(Gln). The protein is Aspartyl/glutamyl-tRNA(Asn/Gln) amidotransferase subunit B of Clostridium botulinum (strain Kyoto / Type A2).